The following is a 366-amino-acid chain: DNA integrity scanning protein DisA (366 aa).

One can recognise a DAC domain in the interval 21–159 (VHTLKGTLQR…EGKAHMLEQP (139 aa)). Residues Gly88, Leu106, and 119–123 (TRHRS) contribute to the ATP site.

The protein belongs to the DisA family. As to quaternary structure, homooctamer. The cofactor is Mg(2+).

The enzyme catalyses 2 ATP = 3',3'-c-di-AMP + 2 diphosphate. Participates in a DNA-damage check-point. DisA forms globular foci that rapidly scan along the chromosomes searching for lesions. Functionally, also has diadenylate cyclase activity, catalyzing the condensation of 2 ATP molecules into cyclic di-AMP (c-di-AMP). c-di-AMP likely acts as a signaling molecule that may couple DNA integrity with a cellular process. The protein is DNA integrity scanning protein DisA of Corynebacterium glutamicum (strain R).